Consider the following 515-residue polypeptide: 2-isopropylmalate synthase (515 aa).

The 263-residue stretch at 5–267 folds into the Pyruvate carboxyltransferase domain; it reads VIIFDTTLRD…STGIKHEEIH (263 aa). Mn(2+) is bound by residues Asp-14, His-202, His-204, and Asn-238. Residues 392–515 form a regulatory domain region; the sequence is KLNYLSVQSG…EMKQKKIATV (124 aa).

Belongs to the alpha-IPM synthase/homocitrate synthase family. LeuA type 1 subfamily. In terms of assembly, homodimer. The cofactor is Mn(2+).

It localises to the cytoplasm. It carries out the reaction 3-methyl-2-oxobutanoate + acetyl-CoA + H2O = (2S)-2-isopropylmalate + CoA + H(+). The protein operates within amino-acid biosynthesis; L-leucine biosynthesis; L-leucine from 3-methyl-2-oxobutanoate: step 1/4. Its function is as follows. Catalyzes the condensation of the acetyl group of acetyl-CoA with 3-methyl-2-oxobutanoate (2-ketoisovalerate) to form 3-carboxy-3-hydroxy-4-methylpentanoate (2-isopropylmalate). This Vibrio parahaemolyticus serotype O3:K6 (strain RIMD 2210633) protein is 2-isopropylmalate synthase.